The primary structure comprises 291 residues: Oxidative stress-responsive serine-rich protein 1 (291 aa).

Residues 29–139 (ISLSVGEGPS…NAGENSTSLD (111 aa)) are disordered. Residues 65-83 (STRKSSRGAVRTQRRRRSK) show a composition bias toward basic residues. Polar residues predominate over residues 95-105 (CSTTAPPSSSQ). Threonine 143 carries the post-translational modification Phosphothreonine.

The sequence is that of Oxidative stress-responsive serine-rich protein 1 (Oser1) from Mus musculus (Mouse).